Here is a 418-residue protein sequence, read N- to C-terminus: Delta(14)-sterol reductase TM7SF2 (418 aa).

Transmembrane regions (helical) follow at residues 13-35 (FGGPLGVAALLILLPATMFHLLL), 62-81 (ALLLLFIWLGLQVALYLLPA), 102-124 (GFQALVLTALLMGLGVSVGLPLG), 129-148 (MLLPLAFATTLTSFIFSLLL), 255-277 (FGFMLVFGDLAWVPFTYSLQAQF), and 287-304 (LPMALLICLLKVIGYYIF). NADP(+) is bound by residues Lys311, Arg315, Leu338, Trp343, and 350-351 (NY). Residues 355-377 (LIMALAWSLPCGLSHLLPYFYVL) traverse the membrane as a helical segment. Residues Asp390, 394–398 (CLQKY), and Tyr405 contribute to the NADP(+) site.

It belongs to the ERG4/ERG24 family. Strongly expressed in liver, weaker in ovary, testis, kidney and brain.

The protein localises to the endoplasmic reticulum membrane. Its subcellular location is the microsome membrane. It catalyses the reaction 4,4-dimethyl-5alpha-cholesta-8,24-dien-3beta-ol + NADP(+) = 4,4-dimethyl-5alpha-cholesta-8,14,24-trien-3beta-ol + NADPH + H(+). It carries out the reaction 5alpha-cholest-8,14-dien-3beta-ol + NADPH + H(+) = 5alpha-cholest-8-en-3beta-ol + NADP(+). The catalysed reaction is 4,4-dimethyl-8,14-cholestadien-3beta-ol + NADPH + H(+) = 4,4-dimethyl-5alpha-cholest-8-en-3beta-ol + NADP(+). The protein operates within steroid biosynthesis; cholesterol biosynthesis. In terms of biological role, catalyzes the reduction of the C14-unsaturated bond of lanosterol, as part of the metabolic pathway leading to cholesterol biosynthesis. The sequence is that of Delta(14)-sterol reductase TM7SF2 (Tm7sf2) from Mus musculus (Mouse).